A 128-amino-acid chain; its full sequence is Large ribosomal subunit protein bL17 (128 aa).

Belongs to the bacterial ribosomal protein bL17 family. Part of the 50S ribosomal subunit. Contacts protein L32.

This Haemophilus influenzae (strain 86-028NP) protein is Large ribosomal subunit protein bL17.